The following is a 453-amino-acid chain: Aryl hydrocarbon receptor nuclear translocator homolog (453 aa).

One can recognise a bHLH domain in the interval 44–97 (FARENHSEIERRRRNKMTHYINELAEMVPQCASLGRKPDKLTILRMAVSHMKGI). PAS domains are found at residues 115–193 (DQEL…LDLK) and 277–347 (ASMP…LSDQ). The PAC domain occupies 348-392 (PMRINIRVRTSTDYIPCTVSAYKFMNPYSEQFEYVVATHQIAPQE). The segment at 410–453 (EFGELGGAPSAVDYGQSSSGGWRPEAQGAPQAQWQWDPMNGYNQ) is disordered.

As to quaternary structure, interacts with hif-1. Heterodimer; efficient DNA binding requires dimerization with another bHLH protein. Forms a heterodimer with ahr-1; binds DNA as heterodimer. Forms a heterodimer with PAS domain-containing protein cky-1; binds DNA as heterodimer. As to expression, expressed in many cell types throughout development, including hypodermal cells, intestinal cells, pharyngeal cells, and neurons. Expressed in every cell during embryo.

Its subcellular location is the nucleus. In terms of biological role, transcription factor. Efficient DNA binding requires dimerization with another bHLH protein, such as cky-1 or ahr-1. Regulates transcription of target genes, probably acting in complex with cky-1. Has a role in cellular differentiation. Required for pharyngeal development. In collaboration with ahr-1 it is involved in RMEL/R and SDQR neuron cell migration. Acts in the cellular response to hypoxia. Involved in aggregation behavior by regulating soluble guanylate cyclase gene expression in the URX neurons. In Caenorhabditis elegans, this protein is Aryl hydrocarbon receptor nuclear translocator homolog.